Consider the following 521-residue polypeptide: Methionine--tRNA ligase (521 aa).

The short motif at 14–24 (YYSSGNPHIGH) is the 'HIGH' region element. Residues Cys129, Cys132, Cys151, and His155 each coordinate Zn(2+). The short motif at 306–310 (KMSKS) is the 'KMSKS' region element. Lys309 is a binding site for ATP.

It belongs to the class-I aminoacyl-tRNA synthetase family. MetG type 2A subfamily. Monomer. Zn(2+) is required as a cofactor.

It localises to the cytoplasm. The enzyme catalyses tRNA(Met) + L-methionine + ATP = L-methionyl-tRNA(Met) + AMP + diphosphate. Functionally, is required not only for elongation of protein synthesis but also for the initiation of all mRNA translation through initiator tRNA(fMet) aminoacylation. The protein is Methionine--tRNA ligase of Ureaplasma parvum serovar 3 (strain ATCC 700970).